Here is a 355-residue protein sequence, read N- to C-terminus: Agamous-like MADS-box protein AGL81 (355 aa).

A disordered region spans residues 1–22 (MAIRSLPSSSRCSSSSSSSSYS). Residues 26-68 (TSLSNRLETIFKKASELCTLCDIEACVIYYGPDGELKTWPPER) enclose the MADS-box domain. The span at 162–174 (VESQKHKETKPDH) shows a compositional bias: basic and acidic residues. The tract at residues 162 to 186 (VESQKHKETKPDHQSLASSSLNHQT) is disordered. Residues 176–186 (SLASSSLNHQT) are compositionally biased toward polar residues.

As to quaternary structure, interacts with MEE14/CBP1.

Its subcellular location is the nucleus. Its function is as follows. Probable transcription factor that may function in the maintenance of the proper function of the central cell in pollen tube attraction. The sequence is that of Agamous-like MADS-box protein AGL81 from Arabidopsis thaliana (Mouse-ear cress).